The chain runs to 140 residues: Nucleoside diphosphate kinase (140 aa).

Residues Lys-11, Phe-59, Arg-87, Thr-93, Arg-104, and Asn-114 each coordinate ATP. His-117 (pros-phosphohistidine intermediate) is an active-site residue.

Belongs to the NDK family. In terms of assembly, homotetramer. The cofactor is Mg(2+).

The protein localises to the cytoplasm. The catalysed reaction is a 2'-deoxyribonucleoside 5'-diphosphate + ATP = a 2'-deoxyribonucleoside 5'-triphosphate + ADP. The enzyme catalyses a ribonucleoside 5'-diphosphate + ATP = a ribonucleoside 5'-triphosphate + ADP. Major role in the synthesis of nucleoside triphosphates other than ATP. The ATP gamma phosphate is transferred to the NDP beta phosphate via a ping-pong mechanism, using a phosphorylated active-site intermediate. This chain is Nucleoside diphosphate kinase, found in Roseobacter denitrificans (strain ATCC 33942 / OCh 114) (Erythrobacter sp. (strain OCh 114)).